Consider the following 329-residue polypeptide: GTPase Obg (329 aa).

The 159-residue stretch at 1–159 folds into the Obg domain; that stretch reads MQFIDQARIT…WPLQLELKLL (159 aa). Residues 160 to 328 form the OBG-type G domain; that stretch reads AEVGIIGLPN…LLAETWVELG (169 aa). ATP is bound by residues 166-173, 191-195, 213-216, 280-283, and 309-311; these read GLPNAGKS, FTTLV, DIPG, NKQE, and SAA. The Mg(2+) site is built by serine 173 and threonine 193.

Belongs to the TRAFAC class OBG-HflX-like GTPase superfamily. OBG GTPase family. As to quaternary structure, monomer. Requires Mg(2+) as cofactor.

It is found in the cytoplasm. An essential GTPase which binds GTP, GDP and possibly (p)ppGpp with moderate affinity, with high nucleotide exchange rates and a fairly low GTP hydrolysis rate. Plays a role in control of the cell cycle, stress response, ribosome biogenesis and in those bacteria that undergo differentiation, in morphogenesis control. The protein is GTPase Obg of Synechococcus sp. (strain CC9605).